The sequence spans 217 residues: Large ribosomal subunit protein uL3 (217 aa).

The interval 137–160 (VSASHGSHRNHRKPGSIGASSTPS) is disordered.

The protein belongs to the universal ribosomal protein uL3 family. As to quaternary structure, part of the 50S ribosomal subunit. Forms a cluster with proteins L14 and L19.

One of the primary rRNA binding proteins, it binds directly near the 3'-end of the 23S rRNA, where it nucleates assembly of the 50S subunit. This chain is Large ribosomal subunit protein uL3, found in Clavibacter sepedonicus (Clavibacter michiganensis subsp. sepedonicus).